The primary structure comprises 249 residues: Proteasome subunit alpha type-3 (249 aa).

The protein belongs to the peptidase T1A family. As to quaternary structure, the 26S proteasome consists of a 20S proteasome core and two 19S regulatory subunits. The 20S proteasome core is composed of 28 subunits that are arranged in four stacked rings, resulting in a barrel-shaped structure. The two end rings are each formed by seven alpha subunits, and the two central rings are each formed by seven beta subunits. The catalytic chamber with the active sites is on the inside of the barrel.

It is found in the cytoplasm. The protein localises to the nucleus. In terms of biological role, the proteasome is a multicatalytic proteinase complex which is characterized by its ability to cleave peptides with Arg, Phe, Tyr, Leu, and Glu adjacent to the leaving group at neutral or slightly basic pH. The proteasome has an ATP-dependent proteolytic activity. In Oryza sativa subsp. japonica (Rice), this protein is Proteasome subunit alpha type-3 (PAG1).